A 428-amino-acid polypeptide reads, in one-letter code: E3 ubiquitin-protein ligase RNF128 (428 aa).

The N-terminal stretch at 1 to 38 is a signal peptide; it reads MGPPPGIGVYCRGGCGAARLLAWCFLLALSPHAPGSRG. N-linked (GlcNAc...) asparagine glycans are attached at residues Asn48, Asn59, and Asn101. In terms of domain architecture, PA spans 75–183; the sequence is SPLEPVSGVL…LKGTKILQSI (109 aa). A helical transmembrane segment spans residues 208 to 228; sequence IFFVSVSFFIITAATVGYFIF. The RING-type; atypical zinc finger occupies 277–318; sequence CAVCIELYKPNDLVRILTCNHIFHKTCVDPWLLEHRTCPMCK. Residues 342–351 are compositionally biased toward polar residues; the sequence is VSNEASNTAS. Residues 342-428 are disordered; sequence VSNEASNTAS…QEAAVREIKS (87 aa).

In terms of processing, auto-ubiquitinated. Controls the development of T-cell clonal anergy by ubiquitination. Expressed in brain, kidney, heart, liver, ovary, testis and thymus. Expression increased as early as 4 hours by 5- to 7-fold in anergized cultures as compared to resting or activated cells.

It is found in the cytoplasm. The protein localises to the endomembrane system. It localises to the cytoskeleton. The protein resides in the perinuclear region. The catalysed reaction is S-ubiquitinyl-[E2 ubiquitin-conjugating enzyme]-L-cysteine + [acceptor protein]-L-lysine = [E2 ubiquitin-conjugating enzyme]-L-cysteine + N(6)-ubiquitinyl-[acceptor protein]-L-lysine.. It functions in the pathway protein modification; protein ubiquitination. In terms of biological role, E3 ubiquitin-protein ligase that catalyzes 'Lys-27', 'Lys-48'- or 'Lys-63'-linked polyubiquitin chains formation and plays a role in different biological processes such as modulation of immune response, cytoskeletal dynamics or protein homeostasis. Inhibits IL2 and IL4 transcription, thereby playing an important role in the induction of the anergic phenotype, a long-term stable state of T-lymphocyte unresponsiveness to antigenic stimulation associated with the blockade of interleukin production. Ubiquitinates ARPC5 with 'Lys-48' linkages and COR1A with 'Lys-63' linkages leading to their degradation, down-regulation of these cytoskeletal components results in impaired lamellipodium formation and reduced accumulation of F-actin at the immunological synapse. Functions in the patterning of the dorsal ectoderm; sensitizes ectoderm to respond to neural-inducing signals. Plays a positive role in innate immune response by promoting 'Lys-63'-linked ubiquitination of TBK1 after RNA- or DNA-virus infection. Regulates alveolar macrophage activation and neutrophil infiltration by interacting with TLR4, targeting it for degradation, and inhibiting NF-kappa-B activation, hence decreasing pro-inflammatory cytokines. Negatively regulates the IL-3/STAT5 signaling pathway by facilitating 'Lys-27'-linked polyubiquitination of IL3RA leading to its degradation via lysosomal pathway. Directly regulates the N-glycosylation process in the endoplasmic reticulum by targeting the glycosyl-transferase RPN1 for ubiquitination and degradation. Other substrates targeted for degradation by RNF128 include transmembrane proteins CD40L, CD83 or the tetraspanin CD151. The polypeptide is E3 ubiquitin-protein ligase RNF128 (Rnf128) (Mus musculus (Mouse)).